The sequence spans 97 residues: High mobility group protein homolog NHP1 (97 aa).

Residues 1-24 form a disordered region; it reads MAGASDRTGVRRPRKAKKDPNAPK. Residues 23–93 constitute a DNA-binding region (HMG box); that stretch reads PKRALSSYMF…RYEREKAEYA (71 aa).

It is found in the nucleus. The sequence is that of High mobility group protein homolog NHP1 from Babesia bovis.